Consider the following 708-residue polypeptide: GID complex associated protein 12 (708 aa).

A compositionally biased stretch (low complexity) spans 381–396 (SSRRNSSFSTASSEPR). A disordered region spans residues 381–403 (SSRRNSSFSTASSEPRPLSRRRR).

As to quaternary structure, interacts with core components of the GID/CTLH ubiquitin ligase complex. GID12 binds both the substrate receptor GID4 and the tip of GID5 in the scaffolding module, sealing GID4 onto the scaffold.

In terms of biological role, regulator of the GID E3 ligase complex. Modulates both assembly of the substrate receptor GID4 into the GID E3 ligase complex and its activity toward its substrates. GID12-binding remodels the N-degron binding pocket in the GID(SR4) complex, and could limit substrate accessibility of a bulky substrate to a ubiquitynation active site, thereby stabilizing gluconeogenic enzyme substrates. Involved in actin patch formation. This is GID complex associated protein 12 from Saccharomyces cerevisiae (strain ATCC 204508 / S288c) (Baker's yeast).